The following is a 233-amino-acid chain: Orotidine 5'-phosphate decarboxylase (233 aa).

Residues Asp9, Lys31, 58–67, Thr120, Arg182, Gln191, Gly211, and Arg212 contribute to the substrate site; that span reads DLKLHDIPNT. The active-site Proton donor is the Lys60.

This sequence belongs to the OMP decarboxylase family. Type 1 subfamily. Homodimer.

The enzyme catalyses orotidine 5'-phosphate + H(+) = UMP + CO2. The protein operates within pyrimidine metabolism; UMP biosynthesis via de novo pathway; UMP from orotate: step 2/2. Functionally, catalyzes the decarboxylation of orotidine 5'-monophosphate (OMP) to uridine 5'-monophosphate (UMP). The polypeptide is Orotidine 5'-phosphate decarboxylase (Listeria monocytogenes serotype 4a (strain HCC23)).